The following is a 451-amino-acid chain: Golgi reassembly-stacking protein 2 (451 aa).

Glycine 2 carries N-myristoyl glycine lipidation. PDZ GRASP-type domains follow at residues 15–105 (EGYH…FCSF) and 111–199 (NVWH…YGYL). Positions 15 to 215 (EGYHVLRVQE…PFEEGKKISL (201 aa)) are GRASP. Residues arginine 30 and arginine 47 each carry the dimethylated arginine modification. The important for membrane binding stretch occupies residues 194–199 (IGYGYL). Position 214 is a phosphoserine (serine 214). Threonine 222 is subject to Phosphothreonine. A Phosphothreonine; by MAPK modification is found at threonine 225. A compositionally biased stretch (low complexity) spans 236-252 (LSSVSPPSLSPPGTTGV). Disordered stretches follow at residues 236–255 (LSSV…VEQS) and 377–451 (EGSS…SEPS). A compositionally biased stretch (polar residues) spans 410 to 424 (SSLTVDVTSPASKVP). Serine 411 carries the post-translational modification Phosphoserine. Phosphothreonine is present on residues threonine 417 and threonine 435. 2 positions are modified to phosphoserine: serine 443 and serine 448.

The protein belongs to the GORASP family. Homodimer. Homooligomer. ER stress induces phosphorylation-dependent monomerization. Interacts with BLZF1/Golgin 45. Identified in a complex with RAB2 and GORASP2. Interacts with JAM2 and JAM3. Interacts with members of the p24 cargo receptors. Interacts with CNIH and the cytoplasmic domain of transmembrane TGFA, prior its transit in the trans-Golgi. Interacts with KCTD5. Interacts with TMED2 and TMED3. Interacts with SEC16A in response to ER stress. Interacts (via PDZ GRASP-type 1 domain) with core-glycosylated CFTR in response to ER stress. In terms of processing, myristoylated. Myristoylation is essential for the Golgi targeting. Palmitoylated. Post-translationally, phosphorylated in mitotic cells. ER stress-induced phosphorylation at Ser-443 induces monomerization and subsequent relocalization from Golgi to ER which is essential for mediating unconventional (ER/Golgi-independent) trafficking of CFTR to the cell membrane. As to expression, detected in lung, heart and testis. Colocalized in a polarized fashion in the acrosome region with JAM3 in round spermatids (at protein level).

The protein resides in the golgi apparatus membrane. The protein localises to the endoplasmic reticulum membrane. It is found in the golgi apparatus. Key structural protein of the Golgi apparatus. The membrane cisternae of the Golgi apparatus adhere to each other to form stacks, which are aligned side by side to form the Golgi ribbon. Acting in concert with GORASP1/GRASP65, is required for the formation and maintenance of the Golgi ribbon, and may be dispensable for the formation of stacks. However, other studies suggest that GORASP2 plays a role in assembly and membrane stacking of the Golgi cisternae, and in the process by which Golgi stacks reform after breakdown during mitosis and meiosis. May regulate the intracellular transport and presentation of a defined set of transmembrane proteins, such as transmembrane TGFA. Required for normal acrosome formation during spermiogenesis and normal male fertility, probably by promoting colocalization of JAM2 and JAM3 at contact sites between germ cells and Sertoli cells. Mediates ER stress-induced unconventional (ER/Golgi-independent) trafficking of core-glycosylated CFTR to cell membrane. The sequence is that of Golgi reassembly-stacking protein 2 (Gorasp2) from Mus musculus (Mouse).